Consider the following 911-residue polypeptide: MDWHSFRIAALLLTSLVVLEVNSEFQIQVRDHNAKNGTIKWHSIRRQKREWIKFAAACREGEDNSKRNPIAKIHSDCAANQPVTYRISGVGIDQPPYGIFIINQKTGEINITSIVDREVTPFFIIYCRALNAQGQDLENPLELRVRVMDINDNPPVFSMTTFLGQIEENSNANTLVMKLNATDADEPNNLNSMIAFKIIRQEPSDSPMFTINRKTGEIRTMNNFLDREQYSQYSLVVRGSDRDGGADGMSAESECSITILDVNDNIPYLEQSSYDITIEENTLHSQLLQIRVIDLDEEFSDNWKAIIFFISGNEGNWFEIEMNERTNVGTLKVVKPLDYEAVKNLQLCIGVRNVAEFHQSIISQYRLTVTLITVTVLNVVKGCVFQPGSKTFIVDSRMEANHTVGEFLATDCETGQATNKFKNVRYRYVMGNNPENLLVVDSGIITLRNRVTMEQYERLNKRYEGTVLSIHDSLQRTCTGTIIMVLCGFWTTTEHPTTSTEKPVTLSITPNVDNVHFGPAGIGLLIMGFLVLGLVPFLLISCDCGGAPGGGAGFEPVPECSDGAIHTWAVEGPQPGGITTICVPQMPPGNANVIEYIDNSGVYTNEYCGREMQDLGGGERTTGFELMDGVKTSAAPEICQEYSGTLRRNSMRECRDGGLNMNFMESYFCQKAYAYADEDEGRPSNDCLLIYDIEGVGSPAGSVGCCSFIEDLDESFLDTLGPKFKKLADISLGKEIDSYPDPDPSWPPQSTEPICPQHMEQLASGHPSISPHFGKTTVISENAYPSGPGVQHPMLIPDPLGYGNITVRESYTTSGTLKPSVHFHDNQQASNVVVTERVVGPISGADLHGMLEIPALRDGTNVIVTERVIAPGSSLPNSLTIPNPRETSNVVVTERVIQPTSGMIGNLSIPP.

An N-terminal signal peptide occupies residues 1–23 (MDWHSFRIAALLLTSLVVLEVNS). Positions 24–49 (EFQIQVRDHNAKNGTIKWHSIRRQKR) are excised as a propeptide. Cadherin domains are found at residues 50–157 (EWIK…PPVF), 158–269 (SMTT…IPYL), and 270–389 (EQSS…QPGS). At 50-519 (EWIKFAAACR…PNVDNVHFGP (470 aa)) the chain is on the extracellular side. N-linked (GlcNAc...) (high mannose) asparagine glycosylation occurs at Asn110. Asn180 carries an N-linked (GlcNAc...) asparagine glycan. Asn401 is a glycosylation site (N-linked (GlcNAc...) asparagine). Residues 520-540 (AGIGLLIMGFLVLGLVPFLLI) traverse the membrane as a helical segment. Topologically, residues 541 to 911 (SCDCGGAPGG…GMIGNLSIPP (371 aa)) are cytoplasmic. Desmoglein repeat repeat units follow at residues 783-809 (AYPS…TVRE), 810-839 (SYTT…ERVV), 840-869 (GPIS…ERVI), and 870-897 (APGS…ERVI). One copy of the Desmoglein repeat 5; truncated repeat lies at 898-911 (QPTSGMIGNLSIPP).

In terms of assembly, interacts with DSC3; there is evidence to suggest that the interaction promotes cell-cell adhesion of keratinocytes. As to expression, expressed in epidermis, brain, liver, skeletal, muscle and testis.

The protein resides in the cell membrane. The protein localises to the cell junction. Its subcellular location is the desmosome. It is found in the cytoplasm. It localises to the nucleus. Its function is as follows. Component of intercellular desmosome junctions. Involved in the interaction of plaque proteins and intermediate filaments mediating cell-cell adhesion. This Mus musculus (Mouse) protein is Desmoglein-1-gamma (Dsg1c).